Consider the following 232-residue polypeptide: Nucleoside diphosphate kinase 2, chloroplastic (232 aa).

The transit peptide at 1 to 79 directs the protein to the chloroplast; it reads MGCLSVVGAS…TRIFLPHLVA (79 aa). 6 residues coordinate ATP: K92, F140, R168, T174, R185, and N195. Residue H198 is the Pros-phosphohistidine intermediate of the active site.

Belongs to the NDK family. The cofactor is Mg(2+).

It localises to the plastid. Its subcellular location is the chloroplast. The enzyme catalyses a 2'-deoxyribonucleoside 5'-diphosphate + ATP = a 2'-deoxyribonucleoside 5'-triphosphate + ADP. The catalysed reaction is a ribonucleoside 5'-diphosphate + ATP = a ribonucleoside 5'-triphosphate + ADP. Its function is as follows. Major role in the synthesis of nucleoside triphosphates other than ATP. The ATP gamma phosphate is transferred to the NDP beta phosphate via a ping-pong mechanism, using a phosphorylated active-site intermediate. The sequence is that of Nucleoside diphosphate kinase 2, chloroplastic from Nicotiana tabacum (Common tobacco).